Here is a 133-residue protein sequence, read N- to C-terminus: Fatty acid-binding protein homolog 2 (133 aa).

A fatty acid contacts are provided by residues Arg107 and 127-129; that span reads RTY.

This sequence belongs to the calycin superfamily. Fatty-acid binding protein (FABP) family.

In terms of biological role, may play a role in the acquisition, storage, and transport of lipids, and may be important to the organism since it is incapable of synthesizing most of its lipids de novo. In Echinococcus granulosus (Hydatid tapeworm), this protein is Fatty acid-binding protein homolog 2 (FABP2).